Here is an 85-residue protein sequence, read N- to C-terminus: Conotoxin Lv15a (85 aa).

An N-terminal signal peptide occupies residues 1 to 23 (MEKLTVLILVATVLLMIQVLAQS). Residues 24 to 49 (GGDKHLKRRPKQYATKRLSALMRGHR) constitute a propeptide that is removed on maturation. Position 50 is a pyrrolidone carboxylic acid (Q50).

It belongs to the conotoxin O2 superfamily. In terms of processing, contains 4 disulfide bonds. Expressed by the venom duct.

It is found in the secreted. The sequence is that of Conotoxin Lv15a from Conus lividus (Livid cone).